The sequence spans 141 residues: Hemoglobin subunit alpha (141 aa).

The Globin domain occupies 1–141 (VLSAADKGHV…VSTVLTSKYR (141 aa)). A Phosphoserine modification is found at Ser-3. An N6-succinyllysine mark is found at Lys-7 and Lys-11. Lys-16 is subject to N6-acetyllysine; alternate. Lys-16 carries the post-translational modification N6-succinyllysine; alternate. At Tyr-24 the chain carries Phosphotyrosine. A Phosphoserine modification is found at Ser-35. An N6-succinyllysine modification is found at Lys-40. Ser-49 carries the post-translational modification Phosphoserine. His-58 provides a ligand contact to O2. Residue His-87 coordinates heme b. Ser-102 bears the Phosphoserine mark. Thr-108 is modified (phosphothreonine). Ser-124 bears the Phosphoserine mark. A phosphothreonine mark is found at Thr-134 and Thr-137. Ser-138 carries the phosphoserine modification.

This sequence belongs to the globin family. Heterotetramer of two alpha chains and two beta chains. As to expression, red blood cells.

Involved in oxygen transport from the lung to the various peripheral tissues. Its function is as follows. Hemopressin acts as an antagonist peptide of the cannabinoid receptor CNR1. Hemopressin-binding efficiently blocks cannabinoid receptor CNR1 and subsequent signaling. This Macropus giganteus (Eastern gray kangaroo) protein is Hemoglobin subunit alpha (HBA).